The sequence spans 213 residues: Motile sperm domain-containing protein 1 (213 aa).

The region spanning 16–143 is the MSP domain; it reads PVFVFPTELI…KEHLTESVFF (128 aa). The next 2 helical transmembrane spans lie at 159 to 179 and 191 to 211; these read SLLT…PTLG and LSVN…MAIL. The Nuclear export signal motif lies at 205-208; that stretch reads LITM.

Widely expressed. Shows highest expression in ribs, and slightly lower levels of expression in heart, kidney, muscle, thymus, calvariae and lung. Also detected at low levels in spleen and liver.

It is found in the endoplasmic reticulum membrane. The protein localises to the golgi apparatus membrane. Its function is as follows. Plays a role in differentiation and/or proliferation of mesenchymal stem cells. Proposed to be involved in epithelial-to-mesenchymal transition (EMT). However, another study suggests that it is not required for EMT or stem cell self-renewal and acts during later stages of differentiation. In Mus musculus (Mouse), this protein is Motile sperm domain-containing protein 1 (Mospd1).